Here is a 350-residue protein sequence, read N- to C-terminus: UDP-N-acetylenolpyruvoylglucosamine reductase (350 aa).

An FAD-binding PCMH-type domain is found at 24–195; sequence HVEATARWLL…VAVEFNLPLL (172 aa). The active site involves R172. S245 functions as the Proton donor in the catalytic mechanism. Residue E342 is part of the active site.

It belongs to the MurB family. It depends on FAD as a cofactor.

It localises to the cytoplasm. It carries out the reaction UDP-N-acetyl-alpha-D-muramate + NADP(+) = UDP-N-acetyl-3-O-(1-carboxyvinyl)-alpha-D-glucosamine + NADPH + H(+). The protein operates within cell wall biogenesis; peptidoglycan biosynthesis. In terms of biological role, cell wall formation. This Xanthomonas axonopodis pv. citri (strain 306) protein is UDP-N-acetylenolpyruvoylglucosamine reductase.